We begin with the raw amino-acid sequence, 211 residues long: Putative transposase for insertion sequence element IS402 (211 aa).

Positions 51-71 are disordered; the sequence is RRWGRPKTGPNPTDRARPGSK.

This sequence belongs to the transposase 11 family.

Functionally, involved in the transposition of the insertion sequence. This chain is Putative transposase for insertion sequence element IS402, found in Burkholderia cepacia (Pseudomonas cepacia).